A 96-amino-acid polypeptide reads, in one-letter code: Co-chaperonin GroES (96 aa).

The protein belongs to the GroES chaperonin family. In terms of assembly, heptamer of 7 subunits arranged in a ring. Interacts with the chaperonin GroEL.

It is found in the cytoplasm. Functionally, together with the chaperonin GroEL, plays an essential role in assisting protein folding. The GroEL-GroES system forms a nano-cage that allows encapsulation of the non-native substrate proteins and provides a physical environment optimized to promote and accelerate protein folding. GroES binds to the apical surface of the GroEL ring, thereby capping the opening of the GroEL channel. This chain is Co-chaperonin GroES, found in Polynucleobacter asymbioticus (strain DSM 18221 / CIP 109841 / QLW-P1DMWA-1) (Polynucleobacter necessarius subsp. asymbioticus).